The sequence spans 431 residues: D-tagatose-1,6-bisphosphate aldolase subunit KbaZ (431 aa).

The protein belongs to the GatZ/KbaZ family. KbaZ subfamily. Forms a complex with KbaY.

Its pathway is carbohydrate metabolism; D-tagatose 6-phosphate degradation; D-glyceraldehyde 3-phosphate and glycerone phosphate from D-tagatose 6-phosphate: step 2/2. Functionally, component of the tagatose-1,6-bisphosphate aldolase KbaYZ that is required for full activity and stability of the Y subunit. Could have a chaperone-like function for the proper and stable folding of KbaY. When expressed alone, KbaZ does not show any aldolase activity. The protein is D-tagatose-1,6-bisphosphate aldolase subunit KbaZ of Salmonella arizonae (strain ATCC BAA-731 / CDC346-86 / RSK2980).